Here is a 314-residue protein sequence, read N- to C-terminus: D-alanine--D-alanine ligase (314 aa).

The 196-residue stretch at 114 to 309 (KQLWRAHGLP…FDALVLRILD (196 aa)) folds into the ATP-grasp domain. An ATP-binding site is contributed by 140-195 (IEALGLPLIVKPVHEGSTIGISIVETRDALIAAHAEASRFDSAIMAERFVQGEEYT). 3 residues coordinate Mg(2+): Asp-263, Glu-276, and Asn-278.

It belongs to the D-alanine--D-alanine ligase family. Mg(2+) serves as cofactor. It depends on Mn(2+) as a cofactor.

Its subcellular location is the cytoplasm. The catalysed reaction is 2 D-alanine + ATP = D-alanyl-D-alanine + ADP + phosphate + H(+). Its pathway is cell wall biogenesis; peptidoglycan biosynthesis. Its function is as follows. Cell wall formation. The protein is D-alanine--D-alanine ligase of Chromohalobacter salexigens (strain ATCC BAA-138 / DSM 3043 / CIP 106854 / NCIMB 13768 / 1H11).